The primary structure comprises 131 residues: Small ribosomal subunit protein uS8 (131 aa).

It belongs to the universal ribosomal protein uS8 family. As to quaternary structure, part of the 30S ribosomal subunit. Contacts proteins S5 and S12.

Functionally, one of the primary rRNA binding proteins, it binds directly to 16S rRNA central domain where it helps coordinate assembly of the platform of the 30S subunit. In Mesomycoplasma hyopneumoniae (strain 7448) (Mycoplasma hyopneumoniae), this protein is Small ribosomal subunit protein uS8.